Reading from the N-terminus, the 264-residue chain is 3-methyl-2-oxobutanoate hydroxymethyltransferase (264 aa).

The Mg(2+) site is built by D45 and D84. Residues 45 to 46, D84, and K112 contribute to the 3-methyl-2-oxobutanoate site; that span reads DS. E114 is a binding site for Mg(2+). E181 functions as the Proton acceptor in the catalytic mechanism.

This sequence belongs to the PanB family. In terms of assembly, homodecamer; pentamer of dimers. It depends on Mg(2+) as a cofactor.

It is found in the cytoplasm. The catalysed reaction is 3-methyl-2-oxobutanoate + (6R)-5,10-methylene-5,6,7,8-tetrahydrofolate + H2O = 2-dehydropantoate + (6S)-5,6,7,8-tetrahydrofolate. The protein operates within cofactor biosynthesis; (R)-pantothenate biosynthesis; (R)-pantoate from 3-methyl-2-oxobutanoate: step 1/2. Its function is as follows. Catalyzes the reversible reaction in which hydroxymethyl group from 5,10-methylenetetrahydrofolate is transferred onto alpha-ketoisovalerate to form ketopantoate. This Psychromonas ingrahamii (strain DSM 17664 / CCUG 51855 / 37) protein is 3-methyl-2-oxobutanoate hydroxymethyltransferase.